The following is a 311-amino-acid chain: Aspartate carbamoyltransferase catalytic subunit (311 aa).

Carbamoyl phosphate contacts are provided by Arg55 and Thr56. Lys85 provides a ligand contact to L-aspartate. 3 residues coordinate carbamoyl phosphate: Arg106, His135, and Gln138. Positions 168 and 230 each coordinate L-aspartate. 2 residues coordinate carbamoyl phosphate: Leu268 and Pro269.

It belongs to the aspartate/ornithine carbamoyltransferase superfamily. ATCase family. In terms of assembly, heterododecamer (2C3:3R2) of six catalytic PyrB chains organized as two trimers (C3), and six regulatory PyrI chains organized as three dimers (R2).

The catalysed reaction is carbamoyl phosphate + L-aspartate = N-carbamoyl-L-aspartate + phosphate + H(+). It functions in the pathway pyrimidine metabolism; UMP biosynthesis via de novo pathway; (S)-dihydroorotate from bicarbonate: step 2/3. Catalyzes the condensation of carbamoyl phosphate and aspartate to form carbamoyl aspartate and inorganic phosphate, the committed step in the de novo pyrimidine nucleotide biosynthesis pathway. This chain is Aspartate carbamoyltransferase catalytic subunit, found in Yersinia pestis.